Here is a 139-residue protein sequence, read N- to C-terminus: S-adenosylmethionine decarboxylase proenzyme (139 aa).

The Schiff-base intermediate with substrate; via pyruvic acid role is filled by serine 63. Serine 63 bears the Pyruvic acid (Ser); by autocatalysis mark. Residue histidine 68 is the Proton acceptor; for processing activity of the active site. Catalysis depends on cysteine 83, which acts as the Proton donor; for catalytic activity.

This sequence belongs to the prokaryotic AdoMetDC family. Type 1 subfamily. As to quaternary structure, heterotetramer of two alpha and two beta chains arranged as a dimer of alpha/beta heterodimers. Requires pyruvate as cofactor. Is synthesized initially as an inactive proenzyme. Formation of the active enzyme involves a self-maturation process in which the active site pyruvoyl group is generated from an internal serine residue via an autocatalytic post-translational modification. Two non-identical subunits are generated from the proenzyme in this reaction, and the pyruvate is formed at the N-terminus of the alpha chain, which is derived from the carboxyl end of the proenzyme. The post-translation cleavage follows an unusual pathway, termed non-hydrolytic serinolysis, in which the side chain hydroxyl group of the serine supplies its oxygen atom to form the C-terminus of the beta chain, while the remainder of the serine residue undergoes an oxidative deamination to produce ammonia and the pyruvoyl group blocking the N-terminus of the alpha chain.

It carries out the reaction S-adenosyl-L-methionine + H(+) = S-adenosyl 3-(methylsulfanyl)propylamine + CO2. The protein operates within amine and polyamine biosynthesis; S-adenosylmethioninamine biosynthesis; S-adenosylmethioninamine from S-adenosyl-L-methionine: step 1/1. In terms of biological role, catalyzes the decarboxylation of S-adenosylmethionine to S-adenosylmethioninamine (dcAdoMet), the propylamine donor required for the synthesis of the polyamines spermine and spermidine from the diamine putrescine. The chain is S-adenosylmethionine decarboxylase proenzyme from Pyrococcus furiosus (strain ATCC 43587 / DSM 3638 / JCM 8422 / Vc1).